The chain runs to 1347 residues: Serine-aspartate repeat-containing protein D (1347 aa).

An N-terminal signal peptide occupies residues 1–35; it reads MLNRENKTAITRKGMVSNRLNKFSIRKYTVGTASI. The YSIRK-G/S signaling motif signature appears at 23 to 34; it reads FSIRKYTVGTAS. The ligand binding A region stretch occupies residues 36–568; that stretch reads LVGTTLIFGL…NNQSGGAGQE (533 aa). The tract at residues 55–185 is disordered; that stretch reads STNKELNEAT…NKKVDAKTES (131 aa). 2 stretches are compositionally biased toward polar residues: residues 62–71 and 94–109; these read EATTSASDNQ and EMVSSQGNETTSNGNK. Residues 130–145 show a composition bias toward basic and acidic residues; the sequence is KSDEQASPKSTNEDLN. Composition is skewed to polar residues over residues 146 to 155 and 163 to 173; these read TKQTISNQEA and NKSVVNAQPTN. A compositionally biased stretch (basic and acidic residues) spans 174-183; that stretch reads EENKKVDAKT. 5 consecutive CNA-B domains span residues 569-680, 681-791, 792-901, 902-1012, and 1013-1123; these read VYKI…IYKP, KYNL…YKTP, KYNL…FYKP, TYNL…YKTS, and KYSL…EEDT. Disordered regions lie at residues 857 to 883, 972 to 992, and 1078 to 1323; these read ETPSGYTPTQVGSGTDEGIDSNGTSTT, YTPTSVTSGNDTEKDSNGLTT, and EKPA…SNNA. Composition is skewed to polar residues over residues 860–869 and 972–981; these read SGYTPTQVGS and YTPTSVTSGN. Composition is skewed to acidic residues over residues 1091-1101 and 1118-1286; these read TEDDKDADGGE and YFEE…DSDS. Residues 1310 to 1314 carry the LPXTG sorting signal motif; it reads LPETG. Threonine 1313 bears the Pentaglycyl murein peptidoglycan amidated threonine mark. Positions 1314-1347 are cleaved as a propeptide — removed by sortase; that stretch reads GNENSGSNNATLFGGLFAALGSLLLFGRRKKQNK.

This sequence belongs to the serine-aspartate repeat-containing protein (SDr) family. Interacts with host DSG1; this interaction increases S.aureus adherence to keratinocytes.

The protein resides in the secreted. It localises to the cell wall. In terms of biological role, cell surface-associated calcium-binding protein which plays an important role in adhesion and pathogenesis. Mediates interactions with components of the extracellular matrix such as host DSG1 to promote bacterial adhesion to host cells. Contributes to the resistance to killing by innate immune components such as neutrophils present in blood and thus attenuates bacterial clearance. This is Serine-aspartate repeat-containing protein D (sdrD) from Staphylococcus aureus (strain MW2).